The primary structure comprises 419 residues: eIF5-mimic protein 2 (419 aa).

Residue methionine 1 is modified to N-acetylmethionine. Over residues 1–15 (MNNQKQQKPTLSGQR) the composition is skewed to polar residues. Residues 1-26 (MNNQKQQKPTLSGQRFKTRKRDEKER) form a disordered region. Serine 12 carries the post-translational modification Phosphoserine. The region spanning 247-414 (NQQTIGARKE…KNAEEESESE (168 aa)) is the W2 domain. A Glycyl lysine isopeptide (Lys-Gly) (interchain with G-Cter in SUMO2) cross-link involves residue lysine 368. A phosphoserine mark is found at serine 411 and serine 413.

Belongs to the BZW family.

Functionally, translation initiation regulator which represses repeat-associated non-AUG (RAN) initiated translation probably by acting as a competitive inhibitor of eukaryotic translation initiation factor 5 (EIF5) function. Enhances histone H4 gene transcription but does not seem to bind DNA directly. The protein is eIF5-mimic protein 2 (BZW1) of Pongo abelii (Sumatran orangutan).